A 344-amino-acid chain; its full sequence is Inositol 2-dehydrogenase/D-chiro-inositol 3-dehydrogenase (344 aa).

Belongs to the Gfo/Idh/MocA family. In terms of assembly, homotetramer.

The enzyme catalyses myo-inositol + NAD(+) = scyllo-inosose + NADH + H(+). It catalyses the reaction 1D-chiro-inositol + NAD(+) = scyllo-inosine + NADH + H(+). The protein operates within polyol metabolism; myo-inositol degradation into acetyl-CoA; acetyl-CoA from myo-inositol: step 1/7. Its function is as follows. Involved in the oxidation of myo-inositol (MI) and D-chiro-inositol (DCI) to 2-keto-myo-inositol (2KMI or 2-inosose) and 1-keto-D-chiro-inositol (1KDCI), respectively. The sequence is that of Inositol 2-dehydrogenase/D-chiro-inositol 3-dehydrogenase from Bacillus licheniformis (strain ATCC 14580 / DSM 13 / JCM 2505 / CCUG 7422 / NBRC 12200 / NCIMB 9375 / NCTC 10341 / NRRL NRS-1264 / Gibson 46).